The following is a 191-amino-acid chain: uncharacterized protein (191 aa).

The next 4 helical transmembrane spans lie at 12–32 (FAFLWFILRSFLVKYLNFFTL), 48–68 (LVALFMLCLSTFSAFSNLTLF), 92–112 (YISVIAPFFKIGFTLLSLLSL), and 168–188 (IFCLSSIFLSLSCSLINSCAF).

The protein localises to the membrane. This is an uncharacterized protein from Saccharomyces cerevisiae (strain ATCC 204508 / S288c) (Baker's yeast).